A 158-amino-acid polypeptide reads, in one-letter code: Transcription elongation factor GreA (158 aa).

It belongs to the GreA/GreB family.

In terms of biological role, necessary for efficient RNA polymerase transcription elongation past template-encoded arresting sites. The arresting sites in DNA have the property of trapping a certain fraction of elongating RNA polymerases that pass through, resulting in locked ternary complexes. Cleavage of the nascent transcript by cleavage factors such as GreA or GreB allows the resumption of elongation from the new 3'terminus. GreA releases sequences of 2 to 3 nucleotides. This Acinetobacter baumannii (strain SDF) protein is Transcription elongation factor GreA.